Consider the following 193-residue polypeptide: Ion-translocating oxidoreductase complex subunit A (193 aa).

The next 6 helical transmembrane spans lie at 5–25 (ILFFISNILIENFILVKFLGL), 47–67 (FVILTSSVLLWCVNFFILLPL), 72–92 (LRIIAYMLIVSVSVQFLEIVL), 102–122 (LLGIFLPLITTNCTVLAIPLF), 134–154 (IFYGLSASLGFALVMIIFSCI), and 167–187 (FQGAPIILITVSLISITFMGF).

It belongs to the NqrDE/RnfAE family. In terms of assembly, the complex is composed of six subunits: RnfA, RnfB, RnfC, RnfD, RnfE and RnfG.

The protein resides in the cell inner membrane. Part of a membrane-bound complex that couples electron transfer with translocation of ions across the membrane. The polypeptide is Ion-translocating oxidoreductase complex subunit A (Buchnera aphidicola subsp. Acyrthosiphon pisum (strain APS) (Acyrthosiphon pisum symbiotic bacterium)).